A 109-amino-acid chain; its full sequence is Spermidine export protein MdtI (109 aa).

Helical transmembrane passes span 6 to 26 (WWHAAFLFLAVVLDILANILL), 36 to 56 (WMGILSLIAVLGAFSALAQAV), 63 to 83 (IAYALWGAFGIIATVAAGWIM), and 88 to 108 (LNYKGWGGIALLLLGMVMIKM).

The protein belongs to the drug/metabolite transporter (DMT) superfamily. Small multidrug resistance (SMR) (TC 2.A.7.1) family. MdtI subfamily. Forms a complex with MdtJ.

The protein resides in the cell inner membrane. Its function is as follows. Catalyzes the excretion of spermidine. This chain is Spermidine export protein MdtI, found in Photorhabdus laumondii subsp. laumondii (strain DSM 15139 / CIP 105565 / TT01) (Photorhabdus luminescens subsp. laumondii).